We begin with the raw amino-acid sequence, 382 residues long: ATP phosphoribosyltransferase regulatory subunit (382 aa).

The protein belongs to the class-II aminoacyl-tRNA synthetase family. HisZ subfamily. In terms of assembly, heteromultimer composed of HisG and HisZ subunits.

The protein localises to the cytoplasm. Its pathway is amino-acid biosynthesis; L-histidine biosynthesis; L-histidine from 5-phospho-alpha-D-ribose 1-diphosphate: step 1/9. In terms of biological role, required for the first step of histidine biosynthesis. May allow the feedback regulation of ATP phosphoribosyltransferase activity by histidine. The protein is ATP phosphoribosyltransferase regulatory subunit of Burkholderia lata (strain ATCC 17760 / DSM 23089 / LMG 22485 / NCIMB 9086 / R18194 / 383).